The sequence spans 162 residues: UPF0460 protein y4xD (162 aa).

It belongs to the UPF0460 family.

This is UPF0460 protein y4xD from Sinorhizobium fredii (strain NBRC 101917 / NGR234).